The sequence spans 640 residues: Protein cereblon (640 aa).

Positions 1-11 (MDDEETAEIDE) are enriched in acidic residues. Disordered stretches follow at residues 1-25 (MDDEETAEIDETNSAAADMQVELGP) and 92-159 (REDP…EAVP). The segment covering 113 to 137 (QPAQQEEQASLPYDSPSRASISSRH) has biased composition (low complexity). The 229-residue stretch at 278–506 (RMLIFMHQHI…IIDTTLKQES (229 aa)) folds into the Lon N-terminal domain. One can recognise a CULT domain in the interval 505–614 (ESLFYCRYCN…LAGSSVRIGK (110 aa)). Residues Cys510, Cys513, Cys579, and Cys582 each coordinate Zn(2+).

This sequence belongs to the CRBN family. Likely a component of a DCX (DDB1-CUL4-X-box) protein ligase complex. May interact with pic/DDB1. In terms of processing, ubiquitinated.

It is found in the nucleus. It functions in the pathway protein modification; protein ubiquitination. Its function is as follows. Substrate recognition component of a DCX (DDB1-CUL4-X-box) E3 protein ligase complex that mediates the ubiquitination and subsequent proteasomal degradation of target proteins. Has an essential role in mediating growth by negatively regulating insulin signaling. It also has a role in maintaining presynaptic function in the neuromuscular junction synapses of third-instar larvae. The sequence is that of Protein cereblon from Drosophila virilis (Fruit fly).